Here is a 199-residue protein sequence, read N- to C-terminus: Probable GTP-binding protein EngB (199 aa).

The EngB-type G domain maps to 21–196 (TKPEYAFIGR…LTYIDEINKQ (176 aa)). GTP contacts are provided by residues 29–36 (GRSNVGKS), 56–60 (GKTQL), 74–77 (DLPG), 141–144 (TKID), and 175–177 (TSS). Positions 36 and 58 each coordinate Mg(2+).

It belongs to the TRAFAC class TrmE-Era-EngA-EngB-Septin-like GTPase superfamily. EngB GTPase family. Mg(2+) serves as cofactor.

Its function is as follows. Necessary for normal cell division and for the maintenance of normal septation. The chain is Probable GTP-binding protein EngB from Cytophaga hutchinsonii (strain ATCC 33406 / DSM 1761 / CIP 103989 / NBRC 15051 / NCIMB 9469 / D465).